We begin with the raw amino-acid sequence, 327 residues long: Olfactory receptor 51T1 (327 aa).

Over 1–27 (MAIFNNTTSSSSNFLLTAFPGLECAHV) the chain is Extracellular. N-linked (GlcNAc...) asparagine glycosylation is found at N5 and N6. Residues 28-48 (WISIPVCCLYTIALLGNSMIF) form a helical membrane-spanning segment. The Cytoplasmic portion of the chain corresponds to 49 to 56 (LVIITKRR). A helical transmembrane segment spans residues 57–77 (LHKPMYYFLSMLAAVDLCLTI). Residues 78 to 101 (TTLPTVLGVLWFHAREISFKACFI) are Extracellular-facing. Residues 102 to 122 (QMFFVHAFSLLESSVLVAMAF) traverse the membrane as a helical segment. Topologically, residues 123 to 141 (DRFVAICNPLNYATILTDR) are cytoplasmic. The helical transmembrane segment at 142–162 (MVLVIGLVICIRPAVFLLPLL) threads the bilayer. Residues 163–198 (VAINTVSFHGGHELSHPFCYHPEVIKYTYSKPWISS) lie on the Extracellular side of the membrane. The helical transmembrane segment at 199-219 (FWGLFLQLYLNGTDVLFILFS) threads the bilayer. The Cytoplasmic portion of the chain corresponds to 220–239 (YVLILRTVLGIVARKKQQKA). The chain crosses the membrane as a helical span at residues 240–260 (LSTCVCHICAVTIFYVPLISL). Topologically, residues 261-275 (SLAHRLFHSTPRVLC) are extracellular. The helical transmembrane segment at 276–296 (STLANIYLLLPPVLNPIIYSL) threads the bilayer. Residues 297–327 (KTKTIRQAMFQLLQSKGSWGFNVRGLRGRWD) lie on the Cytoplasmic side of the membrane.

It belongs to the G-protein coupled receptor 1 family.

It is found in the cell membrane. Functionally, odorant receptor. The protein is Olfactory receptor 51T1 (OR51T1) of Homo sapiens (Human).